Reading from the N-terminus, the 116-residue chain is Distal membrane-arm assembly complex protein 1 (116 aa).

A disordered region spans residues 1–39 (MGSRLSQPFESYITAPPGTAAAPAKPAPPATPGAPTSPA). Over residues 14-24 (TAPPGTAAAPA) the composition is skewed to low complexity. The next 2 helical transmembrane spans lie at 52 to 69 (VLSG…YWVA) and 82 to 104 (WTIT…GIVV).

In terms of assembly, interacts with incompletely assembled mitochondrial NADH:ubiquinone oxidoreductase complex (complex I).

Its subcellular location is the mitochondrion inner membrane. Required for the assembly of the mitochondrial NADH:ubiquinone oxidoreductase complex (complex I). Involved in the assembly of the distal region of complex I. This chain is Distal membrane-arm assembly complex protein 1, found in Homo sapiens (Human).